An 89-amino-acid polypeptide reads, in one-letter code: Dynein light chain 1, cytoplasmic (89 aa).

The protein belongs to the dynein light chain family. Interacts with mett-10; the interaction is direct, and is required for the nuclear localization of mett-10. Component of a dynein-regulating complex composed of at least bicd-1, dlc-1 and egal-1. Interacts with egal-1 and unc-83. Interacts with fbf-2. In terms of tissue distribution, broadly expressed in tissues including the intestine, body wall muscles, germs cells, oocytes, the rectal valve and cells in the head.

It is found in the cytoplasm. The protein localises to the cytoskeleton. The protein resides in the nucleus envelope. Its subcellular location is the cytoplasmic granule. In terms of biological role, acts as a non-catalytic accessory component of a dynein complex. Part of a complex with bicd-1 and egal-1, which is recruited to the nuclear envelope by unc-83, where in turn, it recruits dynein to the nuclear surface and regulates nuclear migrations in hypodermal precursor cells. Probably within a dynein motor complex, plays a role in the cell fate specification of the germline and oogenesis. In particular, it inhibits germ cell proliferation. Regulates the function and localization of the RNA-binding protein fbf-2 in the germline. Plays a role in mitotic and meiotic processes. Involved in the pairing of homologous chromosomes. Independently of its dynein-mediated functions, plays a role in germ cell apoptosis. The polypeptide is Dynein light chain 1, cytoplasmic (Caenorhabditis elegans).